Consider the following 387-residue polypeptide: Succinyl-diaminopimelate desuccinylase (387 aa).

H74 is a binding site for Zn(2+). The active site involves D76. D107 lines the Zn(2+) pocket. Catalysis depends on E142, which acts as the Proton acceptor. Zn(2+) is bound by residues E143, E171, and H360.

This sequence belongs to the peptidase M20A family. DapE subfamily. Homodimer. It depends on Zn(2+) as a cofactor. Co(2+) is required as a cofactor.

It carries out the reaction N-succinyl-(2S,6S)-2,6-diaminopimelate + H2O = (2S,6S)-2,6-diaminopimelate + succinate. It participates in amino-acid biosynthesis; L-lysine biosynthesis via DAP pathway; LL-2,6-diaminopimelate from (S)-tetrahydrodipicolinate (succinylase route): step 3/3. In terms of biological role, catalyzes the hydrolysis of N-succinyl-L,L-diaminopimelic acid (SDAP), forming succinate and LL-2,6-diaminopimelate (DAP), an intermediate involved in the bacterial biosynthesis of lysine and meso-diaminopimelic acid, an essential component of bacterial cell walls. This chain is Succinyl-diaminopimelate desuccinylase, found in Rhodopseudomonas palustris (strain BisA53).